The chain runs to 241 residues: Small ribosomal subunit protein bS6 (241 aa).

A compositionally biased stretch (basic residues) spans 97 to 108 (KPKIRERNRKYT). Residues 97-241 (KPKIRERNRK…YNNKKPQSSN (145 aa)) are disordered. Residues 109 to 118 (LRRDRFDKPN) show a composition bias toward basic and acidic residues. Composition is skewed to low complexity over residues 130–151 (QDQQ…QASQ) and 161–182 (DDFQ…NQSG). Basic and acidic residues predominate over residues 183 to 193 (YHRENNRHNQE). A compositionally biased stretch (low complexity) spans 194–210 (NMHQNNKNHQNQTSQTQ).

Belongs to the bacterial ribosomal protein bS6 family.

Functionally, binds together with bS18 to 16S ribosomal RNA. The chain is Small ribosomal subunit protein bS6 from Mesomycoplasma hyopneumoniae (strain J / ATCC 25934 / NCTC 10110) (Mycoplasma hyopneumoniae).